The chain runs to 287 residues: Protease HtpX (287 aa).

2 helical membrane-spanning segments follow: residues 4 to 24 and 33 to 53; these read IFLL…VMSI and SGLL…SLAI. Position 139 (His139) interacts with Zn(2+). Glu140 is an active-site residue. Zn(2+) is bound at residue His143. Transmembrane regions (helical) follow at residues 154–174 and 195–215; these read LIQG…AGII and AVVF…VAYF. Glu220 contacts Zn(2+).

The protein belongs to the peptidase M48B family. Zn(2+) serves as cofactor.

The protein localises to the cell inner membrane. The sequence is that of Protease HtpX from Shewanella piezotolerans (strain WP3 / JCM 13877).